A 141-amino-acid chain; its full sequence is Galactose-6-phosphate isomerase subunit LacA 1 (141 aa).

The protein belongs to the LacAB/RpiB family. Heteromultimeric protein consisting of LacA and LacB.

It catalyses the reaction aldehydo-D-galactose 6-phosphate = keto-D-tagatose 6-phosphate. The protein operates within carbohydrate metabolism; D-galactose 6-phosphate degradation; D-tagatose 6-phosphate from D-galactose 6-phosphate: step 1/1. The protein is Galactose-6-phosphate isomerase subunit LacA 1 of Streptococcus pyogenes serotype M18 (strain MGAS8232).